Reading from the N-terminus, the 371-residue chain is Ferrochelatase (371 aa).

Fe cation-binding residues include histidine 218 and glutamate 299.

The protein belongs to the ferrochelatase family.

Its subcellular location is the cytoplasm. It catalyses the reaction heme b + 2 H(+) = protoporphyrin IX + Fe(2+). It functions in the pathway porphyrin-containing compound metabolism; protoheme biosynthesis; protoheme from protoporphyrin-IX: step 1/1. In terms of biological role, catalyzes the ferrous insertion into protoporphyrin IX. The sequence is that of Ferrochelatase from Cupriavidus pinatubonensis (strain JMP 134 / LMG 1197) (Cupriavidus necator (strain JMP 134)).